The following is a 577-amino-acid chain: Arginine--tRNA ligase (577 aa).

The 'HIGH' region motif lies at 122 to 132 (PNVAKEMHVGH).

The protein belongs to the class-I aminoacyl-tRNA synthetase family. In terms of assembly, monomer.

It is found in the cytoplasm. The enzyme catalyses tRNA(Arg) + L-arginine + ATP = L-arginyl-tRNA(Arg) + AMP + diphosphate. The polypeptide is Arginine--tRNA ligase (Klebsiella pneumoniae (strain 342)).